We begin with the raw amino-acid sequence, 343 residues long: S-adenosylmethionine:tRNA ribosyltransferase-isomerase (343 aa).

It belongs to the QueA family. As to quaternary structure, monomer.

Its subcellular location is the cytoplasm. It catalyses the reaction 7-aminomethyl-7-carbaguanosine(34) in tRNA + S-adenosyl-L-methionine = epoxyqueuosine(34) in tRNA + adenine + L-methionine + 2 H(+). It participates in tRNA modification; tRNA-queuosine biosynthesis. Functionally, transfers and isomerizes the ribose moiety from AdoMet to the 7-aminomethyl group of 7-deazaguanine (preQ1-tRNA) to give epoxyqueuosine (oQ-tRNA). The sequence is that of S-adenosylmethionine:tRNA ribosyltransferase-isomerase from Coxiella burnetii (strain CbuG_Q212) (Coxiella burnetii (strain Q212)).